The following is a 142-amino-acid chain: MAKKVAGQLKLQVKAGSANPSPPIGPALGQRGINIMEFCKAFNAATQEMEKGMPIPVVITYYQDKSFTFVMKQPPVSYFLKREAKVQAGSKTPGKAKAGSISKAQIRTIAEAKMKDLNAADIDGAMAMVEGSARSMGLEVTG.

Belongs to the universal ribosomal protein uL11 family. As to quaternary structure, part of the ribosomal stalk of the 50S ribosomal subunit. Interacts with L10 and the large rRNA to form the base of the stalk. L10 forms an elongated spine to which L12 dimers bind in a sequential fashion forming a multimeric L10(L12)X complex. Post-translationally, one or more lysine residues are methylated.

Its function is as follows. Forms part of the ribosomal stalk which helps the ribosome interact with GTP-bound translation factors. This is Large ribosomal subunit protein uL11 from Rhizobium meliloti (strain 1021) (Ensifer meliloti).